The sequence spans 333 residues: Glycerol-3-phosphate dehydrogenase [NAD(P)+] (333 aa).

Residues Trp13, Lys33, and Lys108 each coordinate NADPH. Sn-glycerol 3-phosphate contacts are provided by Lys108 and Gly138. Ser142 contacts NADPH. Sn-glycerol 3-phosphate is bound by residues Lys193, Asp246, Ser256, Arg257, and Asn258. Lys193 functions as the Proton acceptor in the catalytic mechanism. An NADPH-binding site is contributed by Arg257. Val281 and Glu283 together coordinate NADPH.

It belongs to the NAD-dependent glycerol-3-phosphate dehydrogenase family.

The protein localises to the cytoplasm. The catalysed reaction is sn-glycerol 3-phosphate + NAD(+) = dihydroxyacetone phosphate + NADH + H(+). It carries out the reaction sn-glycerol 3-phosphate + NADP(+) = dihydroxyacetone phosphate + NADPH + H(+). The protein operates within membrane lipid metabolism; glycerophospholipid metabolism. Its function is as follows. Catalyzes the reduction of the glycolytic intermediate dihydroxyacetone phosphate (DHAP) to sn-glycerol 3-phosphate (G3P), the key precursor for phospholipid synthesis. The sequence is that of Glycerol-3-phosphate dehydrogenase [NAD(P)+] from Bifidobacterium longum (strain DJO10A).